The primary structure comprises 31 residues: Cytochrome b6-f complex subunit 6 (31 aa).

The helical transmembrane segment at 4-24 (LLSYFGFLFAILTLTSVLFIG) threads the bilayer.

It belongs to the PetL family. In terms of assembly, the 4 large subunits of the cytochrome b6-f complex are cytochrome b6, subunit IV (17 kDa polypeptide, PetD), cytochrome f and the Rieske protein, while the 4 small subunits are PetG, PetL, PetM and PetN. The complex functions as a dimer.

Its subcellular location is the plastid. The protein localises to the chloroplast thylakoid membrane. Functionally, component of the cytochrome b6-f complex, which mediates electron transfer between photosystem II (PSII) and photosystem I (PSI), cyclic electron flow around PSI, and state transitions. PetL is important for photoautotrophic growth as well as for electron transfer efficiency and stability of the cytochrome b6-f complex. The protein is Cytochrome b6-f complex subunit 6 of Angiopteris evecta (Mule's foot fern).